The primary structure comprises 447 residues: Sporulation protein YpeB (447 aa).

Belongs to the YpeB family.

In terms of biological role, required for spore cortex hydrolysis during germination. Appears to be required for either expression, localization, activation or function of SleB. The chain is Sporulation protein YpeB from Oceanobacillus iheyensis (strain DSM 14371 / CIP 107618 / JCM 11309 / KCTC 3954 / HTE831).